The primary structure comprises 306 residues: uncharacterized protein (306 aa).

Positions aspartate 287–serine 306 are disordered.

The protein belongs to the aldo/keto reductase family.

The protein localises to the cytoplasm. It is found in the nucleus. This is an uncharacterized protein from Schizosaccharomyces pombe (strain 972 / ATCC 24843) (Fission yeast).